The primary structure comprises 462 residues: Hydroxymethylglutaryl-CoA synthase (462 aa).

The Proton donor/acceptor role is filled by glutamate 86. Cysteine 120 (acyl-thioester intermediate) is an active-site residue. 6 residues coordinate (3S)-3-hydroxy-3-methylglutaryl-CoA: cysteine 120, threonine 211, histidine 261, lysine 270, asparagine 338, and serine 372. Histidine 261 functions as the Proton donor/acceptor in the catalytic mechanism.

This sequence belongs to the thiolase-like superfamily. HMG-CoA synthase family.

The catalysed reaction is acetoacetyl-CoA + acetyl-CoA + H2O = (3S)-3-hydroxy-3-methylglutaryl-CoA + CoA + H(+). It participates in siderophore biosynthesis. Its function is as follows. Hydroxymethylglutaryl-CoA synthase involved in the biosynthesis of siderophore ferrichrome A which is contributing to organismal virulence. The first step of ferrichrome A biosynthesis is performed by the HMG-CoA synthase hcs1 which catalyzes the generation of HMG-CoA and CoA using acetoacetyl-CoA and acetyl-CoA as substrates. The enoyl-CoA isomerase/hydratase fer4 then catalyzes the conversion of hcs1-produced HMG-CoA to methylglutaconyl-CoA. The acyltransferase fer5 then fuses the fer4-generated methylglutaconyl-CoA with sid1-generated hydroxyornithine to yield methylglutaconyl hydroxyornithine. Methylglutaconyl hydroxyornithine is then available for use by the NRPS fer3 to generate ferrichrome A. This chain is Hydroxymethylglutaryl-CoA synthase, found in Mycosarcoma maydis (Corn smut fungus).